Consider the following 71-residue polypeptide: uncharacterized protein (71 aa).

The Sm domain maps to 15–71; sequence PNFEYARRLNGKKVKIFLRNGEVLDAEVTGVSNYEIMVKVGDRNLLVFKHAIDYIEY.

This is an uncharacterized protein from Methanocaldococcus jannaschii (strain ATCC 43067 / DSM 2661 / JAL-1 / JCM 10045 / NBRC 100440) (Methanococcus jannaschii).